The following is a 388-amino-acid chain: Succinate--CoA ligase [ADP-forming] subunit beta (388 aa).

The 236-residue stretch at 9–244 folds into the ATP-grasp domain; it reads KALFAEYGLP…PSQDDAREAH (236 aa). ATP-binding positions include K46, 53-55, E99, T102, and E107; that span reads GRG. The Mg(2+) site is built by N199 and D213. Substrate-binding positions include N264 and 321–323; that span reads GIV.

Belongs to the succinate/malate CoA ligase beta subunit family. As to quaternary structure, heterotetramer of two alpha and two beta subunits. Requires Mg(2+) as cofactor.

It carries out the reaction succinate + ATP + CoA = succinyl-CoA + ADP + phosphate. It catalyses the reaction GTP + succinate + CoA = succinyl-CoA + GDP + phosphate. The protein operates within carbohydrate metabolism; tricarboxylic acid cycle; succinate from succinyl-CoA (ligase route): step 1/1. Its function is as follows. Succinyl-CoA synthetase functions in the citric acid cycle (TCA), coupling the hydrolysis of succinyl-CoA to the synthesis of either ATP or GTP and thus represents the only step of substrate-level phosphorylation in the TCA. The beta subunit provides nucleotide specificity of the enzyme and binds the substrate succinate, while the binding sites for coenzyme A and phosphate are found in the alpha subunit. The chain is Succinate--CoA ligase [ADP-forming] subunit beta from Shewanella pealeana (strain ATCC 700345 / ANG-SQ1).